A 788-amino-acid polypeptide reads, in one-letter code: Cadherin-10 (788 aa).

A signal peptide spans 1-22 (MTIHQFLLLFLFWVCLPHFCSP). Positions 23 to 54 (EIMFRRTPVPQQRILSSRVPRSDGKILHRQKR) are excised as a propeptide. Cadherin domains lie at 55 to 160 (GWMW…EPTF), 161 to 269 (PEEI…PPRF), 270 to 384 (PQNT…PPVF), 385 to 487 (SRSS…DNAP), and 488 to 606 (QFAV…LLLP). Residues 55-613 (GWMWNQFFLL…LLPAGLSTGA (559 aa)) lie on the Extracellular side of the membrane. Asn256 carries an N-linked (GlcNAc...) asparagine glycan. N-linked (GlcNAc...) asparagine glycosylation is found at Asn438, Asn456, and Asn534. The helical transmembrane segment at 614–634 (LIAILLCIIILLVIVVLFAAL) threads the bilayer. Over 635 to 788 (KRQRKKEPLI…YGGGESDKDS (154 aa)) the chain is Cytoplasmic. Residues Ser784 and Ser788 each carry the phosphoserine modification.

In terms of tissue distribution, predominantly expressed in brain. Also found in adult and fetal kidney. Very low levels detected in prostate and fetal lung.

It localises to the cell membrane. In terms of biological role, cadherins are calcium-dependent cell adhesion proteins. They preferentially interact with themselves in a homophilic manner in connecting cells; cadherins may thus contribute to the sorting of heterogeneous cell types. This Homo sapiens (Human) protein is Cadherin-10 (CDH10).